Consider the following 540-residue polypeptide: Zinc finger protein 768 (540 aa).

2 disordered regions span residues 1–166 and 239–258; these read MERE…FEAQ and TGALRGPGRRGGRARGGQGP. 3 positions are modified to phosphoserine: Ser17, Ser18, and Ser23. Tyr27 is modified (phosphotyrosine). Ser33 bears the Phosphoserine mark. Positions 34–53 are enriched in acidic residues; the sequence is ENEEEEISQQEGSGDYEVEE. Residues Ser62, Ser69, Ser76, Ser83, Ser90, Ser97, Ser104, Ser107, Ser111, Ser118, and Ser125 each carry the phosphoserine modification. The segment covering 62–77 has biased composition (low complexity); it reads SPGFEPQSPEFEPQSP. Polar residues predominate over residues 107-119; it reads SDSQSPEFESQSP. Tyr128 is subject to Phosphotyrosine. The residue at position 132 (Ser132) is a Phosphoserine. Tyr135 bears the Phosphotyrosine mark. Ser139 bears the Phosphoserine mark. Phosphotyrosine is present on Tyr142. Ser144 and Ser147 each carry phosphoserine. Positions 149–166 are enriched in polar residues; sequence YESQNTELKTQSPEFEAQ. Thr158 is modified (phosphothreonine). At Ser160 the chain carries Phosphoserine. The segment at 261-283 adopts a C2H2-type 1 zinc-finger fold; sequence NICGICGKSFGRGSTLIQHQRIH. Position 284 is a phosphothreonine (Thr284). At Tyr289 the chain carries Phosphotyrosine. 4 consecutive C2H2-type zinc fingers follow at residues 289–311, 317–339, 345–367, and 373–395; these read YKCEVCSKAFSQSSDLIKHQRTH, YKCPRCGKAFADSSYLLRHQRTH, YKCPHCGKAFGDSSYLLRHQRTH, and YSCTECGKCYSQNSSLRSHQRVH. 2 positions are modified to phosphoserine: Ser295 and Ser299. Thr396 is subject to Phosphothreonine. C2H2-type zinc fingers lie at residues 401–423, 429–451, 457–479, 485–507, and 513–535; these read FSCGICGKSFSQRSALIPHARSH, FKCPECGKRFGQSSVLAIHARTH, YSCPDCGKTFNRSSTLIQHQRSH, YRCAVCGKGFCRSSTLLQHHRVH, and YKCDDCGKAFSQSSDLIRHQRTH. Ser442 is modified (phosphoserine).

The protein belongs to the krueppel C2H2-type zinc-finger protein family. Interacts (via zinc-finger domains) with TP53 (via N-terminus); interaction might be facilitated by TP53 oligomerization state. Interacts with ELP3. May be phosphorylated at residue 'Ser-5' of the tandem heptapeptide repeats in the N-terminus. Phosphorylation might be increased upon RAS pathway activation and negatively regulate protein stability.

Its subcellular location is the nucleus. It is found in the chromosome. Binds to mammalian-wide interspersed repeat (MIRs) sequences in euchromatin and promoter regions of genes at the consensus sequence 5'-GCTGTGTG-[N20]-CCTCTCTG-3', consisting of two anchor regions connected by a linker region; the linker region probably does not contribute to the binding specificity. Required for cell homeostasis. May be involved in transcriptional regulation. The chain is Zinc finger protein 768 (ZNF768) from Homo sapiens (Human).